We begin with the raw amino-acid sequence, 456 residues long: Bifunctional protein GlmU (456 aa).

The pyrophosphorylase stretch occupies residues 1 to 229 (MLNNAMSVVI…LSEVEGVNNR (229 aa)). Residues 11–14 (LAAG), Lys25, Gln76, 81–82 (GT), 103–105 (YGD), Gly140, Glu154, Asn169, and Asn227 each bind UDP-N-acetyl-alpha-D-glucosamine. Residue Asp105 participates in Mg(2+) binding. Residue Asn227 participates in Mg(2+) binding. Positions 230–250 (LQLSRLERVYQSEQAEKLLLA) are linker. The segment at 251–456 (GVMLRDPARF…EGWRRPVKKK (206 aa)) is N-acetyltransferase. UDP-N-acetyl-alpha-D-glucosamine is bound by residues Arg333 and Lys351. The active-site Proton acceptor is the His363. Positions 366 and 377 each coordinate UDP-N-acetyl-alpha-D-glucosamine. Residues Ala380, 386–387 (NY), Ser405, Ala423, and Arg440 each bind acetyl-CoA.

It in the N-terminal section; belongs to the N-acetylglucosamine-1-phosphate uridyltransferase family. The protein in the C-terminal section; belongs to the transferase hexapeptide repeat family. In terms of assembly, homotrimer. It depends on Mg(2+) as a cofactor.

It is found in the cytoplasm. The enzyme catalyses alpha-D-glucosamine 1-phosphate + acetyl-CoA = N-acetyl-alpha-D-glucosamine 1-phosphate + CoA + H(+). It catalyses the reaction N-acetyl-alpha-D-glucosamine 1-phosphate + UTP + H(+) = UDP-N-acetyl-alpha-D-glucosamine + diphosphate. Its pathway is nucleotide-sugar biosynthesis; UDP-N-acetyl-alpha-D-glucosamine biosynthesis; N-acetyl-alpha-D-glucosamine 1-phosphate from alpha-D-glucosamine 6-phosphate (route II): step 2/2. The protein operates within nucleotide-sugar biosynthesis; UDP-N-acetyl-alpha-D-glucosamine biosynthesis; UDP-N-acetyl-alpha-D-glucosamine from N-acetyl-alpha-D-glucosamine 1-phosphate: step 1/1. It participates in bacterial outer membrane biogenesis; LPS lipid A biosynthesis. Functionally, catalyzes the last two sequential reactions in the de novo biosynthetic pathway for UDP-N-acetylglucosamine (UDP-GlcNAc). The C-terminal domain catalyzes the transfer of acetyl group from acetyl coenzyme A to glucosamine-1-phosphate (GlcN-1-P) to produce N-acetylglucosamine-1-phosphate (GlcNAc-1-P), which is converted into UDP-GlcNAc by the transfer of uridine 5-monophosphate (from uridine 5-triphosphate), a reaction catalyzed by the N-terminal domain. The polypeptide is Bifunctional protein GlmU (Shigella dysenteriae serotype 1 (strain Sd197)).